The following is a 348-amino-acid chain: Protein RecA (348 aa).

An ATP-binding site is contributed by 67 to 74 (GPESSGKT).

Belongs to the RecA family.

It localises to the cytoplasm. Can catalyze the hydrolysis of ATP in the presence of single-stranded DNA, the ATP-dependent uptake of single-stranded DNA by duplex DNA, and the ATP-dependent hybridization of homologous single-stranded DNAs. It interacts with LexA causing its activation and leading to its autocatalytic cleavage. The protein is Protein RecA of Amycolatopsis mediterranei (strain U-32).